The chain runs to 71 residues: Protein SlyX homolog (71 aa).

Belongs to the SlyX family.

The sequence is that of Protein SlyX homolog from Rhodopseudomonas palustris (strain BisB5).